We begin with the raw amino-acid sequence, 242 residues long: MEGWQRAFVLHSRPWSETSLMLDVFTEESGRVRLVAKGARSKRSTLKGALQPFTPLLLRFGGRGEVKTLRSAEAVSLALPLSGITLYSGLYINELLSRVLEYETRFSELFFDYLHCIQSLAGDTGTPEPALRRFELALLGHLGYGVNFTHCAGSGEPVDGTMTYRYREEKGFIASVVIDNKTFTGRQLKALNAREFPDADTLRAAKRFTRMALKPYLGGKPLKSRELFRQFMPKRTVKTHYE.

It belongs to the RecO family. In terms of assembly, monomer.

In terms of biological role, involved in DNA repair and RecF pathway recombination. This chain is DNA repair protein RecO, found in Shigella flexneri.